The sequence spans 184 residues: UPF0398 protein BAA_1648 (184 aa).

It belongs to the UPF0398 family.

The sequence is that of UPF0398 protein BAA_1648 from Bacillus anthracis (strain A0248).